The sequence spans 209 residues: Large ribosomal subunit protein uL3 (209 aa).

The tract at residues 124–156 is disordered; that stretch reads KRHNFSGGQRTHGQSDRQRAPGSVGGSSDPSRV.

Belongs to the universal ribosomal protein uL3 family. Part of the 50S ribosomal subunit. Forms a cluster with proteins L14 and L19.

In terms of biological role, one of the primary rRNA binding proteins, it binds directly near the 3'-end of the 23S rRNA, where it nucleates assembly of the 50S subunit. In Pelodictyon phaeoclathratiforme (strain DSM 5477 / BU-1), this protein is Large ribosomal subunit protein uL3.